A 20-amino-acid polypeptide reads, in one-letter code: Endo-1,6-beta-glucanase (20 aa).

This sequence belongs to the glycosyl hydrolase 5 (cellulase A) family.

It is found in the secreted. It localises to the extracellular space. The enzyme catalyses Random hydrolysis of (1-&gt;6)-linkages in (1-&gt;6)-beta-D-glucans.. Endo-1,6-beta-glucanase that has highest activity against the beta-1,6-glucan pustulan. Also active against the beta-1,6-glucan lutean. Lower activity against laminarin (beta-1,3-glucan with beta-1,6-branches). Little or no activity against gentiobiose, yeast glucan, lichenin, scleroglucan, curdlan, barley glucan, CM cellulose, HE cellulose, pachyman and pullulan. This chain is Endo-1,6-beta-glucanase, found in Acremonium sp.